Reading from the N-terminus, the 976-residue chain is Dibasic-processing endoprotease (976 aa).

The N-terminal stretch at 1-17 (MLRKFILGLLLASQAVA) is a signal peptide. Asn-156 is a glycosylation site (N-linked (GlcNAc...) asparagine). Over residues 172–212 (AEEAQKAQDDKGDKKEDQKDDKKEGQEAQKEGDKEDNKGDD) the composition is skewed to basic and acidic residues. The disordered stretch occupies residues 172–246 (AEEAQKAQDD…VQWKPVDESM (75 aa)). The span at 213–231 (KEDGEEDDDDDEDEDDDDA) shows a compositional bias: acidic residues. The region spanning 277 to 595 (QWYLHNVHKA…YGKLDASKIV (319 aa)) is the Peptidase S8 domain. N-linked (GlcNAc...) asparagine glycosylation is found at Asn-291 and Asn-299. Asp-311 serves as the catalytic Charge relay system. Asn-336 carries an N-linked (GlcNAc...) asparagine glycan. Catalysis depends on charge relay system residues His-349 and Ser-528. Residues 524-544 (HGGTSAAAPLAAGVFALALSV) traverse the membrane as a helical segment. The 134-residue stretch at 604–737 (VNNQTSFHSE…QLNVFGEQKD (134 aa)) folds into the P/Homo B domain. A glycan (N-linked (GlcNAc...) asparagine) is linked at Asn-606. Residues 733 to 848 (GEQKDKREEN…SDSHTSWWPD (116 aa)) are disordered. The segment covering 734 to 830 (EQKDKREENK…EEKPEEKPVD (97 aa)) has biased composition (basic and acidic residues). Residues 855–875 (AWLYGAVLLVGGFIAVIGIYA) form a helical membrane-spanning segment. Asn-886 carries N-linked (GlcNAc...) asparagine glycosylation. Residues 914–976 (PEDTHRRSGD…RDNDRQNLLG (63 aa)) form a disordered region. Composition is skewed to basic and acidic residues over residues 915–928 (EDTH…DRLY) and 940–976 (MFRI…NLLG).

Belongs to the peptidase S8 family. Furin subfamily.

The protein localises to the membrane. In Yarrowia lipolytica (strain CLIB 122 / E 150) (Yeast), this protein is Dibasic-processing endoprotease (XPR6).